The primary structure comprises 360 residues: Phenylalanine--tRNA ligase alpha subunit (360 aa).

Mg(2+) is bound at residue Glu260.

The protein belongs to the class-II aminoacyl-tRNA synthetase family. Phe-tRNA synthetase alpha subunit type 1 subfamily. As to quaternary structure, tetramer of two alpha and two beta subunits. It depends on Mg(2+) as a cofactor.

It is found in the cytoplasm. It carries out the reaction tRNA(Phe) + L-phenylalanine + ATP = L-phenylalanyl-tRNA(Phe) + AMP + diphosphate + H(+). This is Phenylalanine--tRNA ligase alpha subunit from Rhizobium rhizogenes (strain K84 / ATCC BAA-868) (Agrobacterium radiobacter).